A 225-amino-acid chain; its full sequence is Uracil-DNA glycosylase (225 aa).

Asp-65 functions as the Proton acceptor in the catalytic mechanism.

This sequence belongs to the uracil-DNA glycosylase (UDG) superfamily. UNG family.

Its subcellular location is the cytoplasm. The enzyme catalyses Hydrolyzes single-stranded DNA or mismatched double-stranded DNA and polynucleotides, releasing free uracil.. Functionally, excises uracil residues from the DNA which can arise as a result of misincorporation of dUMP residues by DNA polymerase or due to deamination of cytosine. This chain is Uracil-DNA glycosylase, found in Bacillus cereus (strain AH820).